A 434-amino-acid chain; its full sequence is Tol-Pal system protein TolB (434 aa).

The first 24 residues, Met-1–Ala-24, serve as a signal peptide directing secretion.

The protein belongs to the TolB family. The Tol-Pal system is composed of five core proteins: the inner membrane proteins TolA, TolQ and TolR, the periplasmic protein TolB and the outer membrane protein Pal. They form a network linking the inner and outer membranes and the peptidoglycan layer.

It localises to the periplasm. Functionally, part of the Tol-Pal system, which plays a role in outer membrane invagination during cell division and is important for maintaining outer membrane integrity. In Histophilus somni (strain 2336) (Haemophilus somnus), this protein is Tol-Pal system protein TolB.